The primary structure comprises 448 residues: StAR-related lipid transfer protein 3 (448 aa).

In terms of domain architecture, MENTAL spans 47–219; the sequence is FSDVRRTFCL…YSPPESLAGS (173 aa). 4 helical membrane passes run 53 to 73, 96 to 116, 122 to 142, and 150 to 170; these read TFCL…IIEL, FFDI…GYAA, WWVI…KVIL, and AFGY…TWFL. The FFAT signature appears at 208–214; it reads QFYSPPE. The START domain maps to 232-445; the sequence is AVTEQEKAFV…LRQRINEVHV (214 aa).

Belongs to the STARD3 family. Homodimer. Phosphorylated. Phosphorylation allows the tethering of two membranes that participates in the formation of ER-endosome contacts. Phosphorylation of FFAT motif drives membrane tethering between the endoplasmic reticulum and late endosomes that in turn allows the efficient transport of sterol mediated by the START domain.

Its subcellular location is the late endosome membrane. The catalysed reaction is cholesterol(in) = cholesterol(out). Its function is as follows. Sterol-binding protein that mediates cholesterol transport from the endoplasmic reticulum to endosomes. The sterol transport mechanism is triggered by phosphorylation of FFAT motif that leads to membrane tethering between the endoplasmic reticulum and late endosomes. Acts as a lipid transfer protein that redirects sterol to the endosome at the expense of the cell membrane and favors membrane formation inside endosomes. This chain is StAR-related lipid transfer protein 3, found in Danio rerio (Zebrafish).